The primary structure comprises 179 residues: Alkyl hydroperoxide reductase AhpD (179 aa).

The active-site Proton donor is the C130. A disulfide bridge connects residues C130 and C133. Catalysis depends on C133, which acts as the Cysteine sulfenic acid (-SOH) intermediate.

This sequence belongs to the AhpD family. As to quaternary structure, homotrimer.

The enzyme catalyses N(6)-[(R)-dihydrolipoyl]-L-lysyl-[lipoyl-carrier protein] + a hydroperoxide = N(6)-[(R)-lipoyl]-L-lysyl-[lipoyl-carrier protein] + an alcohol + H2O. Antioxidant protein with alkyl hydroperoxidase activity. Required for the reduction of the AhpC active site cysteine residues and for the regeneration of the AhpC enzyme activity. The protein is Alkyl hydroperoxide reductase AhpD of Nocardia farcinica (strain IFM 10152).